Here is a 443-residue protein sequence, read N- to C-terminus: Methylenetetrahydrofolate--tRNA-(uracil-5-)-methyltransferase TrmFO (443 aa).

8 to 13 (GAGLAG) serves as a coordination point for FAD.

The protein belongs to the MnmG family. TrmFO subfamily. It depends on FAD as a cofactor.

It localises to the cytoplasm. The catalysed reaction is uridine(54) in tRNA + (6R)-5,10-methylene-5,6,7,8-tetrahydrofolate + NADH + H(+) = 5-methyluridine(54) in tRNA + (6S)-5,6,7,8-tetrahydrofolate + NAD(+). The enzyme catalyses uridine(54) in tRNA + (6R)-5,10-methylene-5,6,7,8-tetrahydrofolate + NADPH + H(+) = 5-methyluridine(54) in tRNA + (6S)-5,6,7,8-tetrahydrofolate + NADP(+). In terms of biological role, catalyzes the folate-dependent formation of 5-methyl-uridine at position 54 (M-5-U54) in all tRNAs. In Thermus thermophilus (strain ATCC 27634 / DSM 579 / HB8), this protein is Methylenetetrahydrofolate--tRNA-(uracil-5-)-methyltransferase TrmFO.